Here is a 130-residue protein sequence, read N- to C-terminus: Holo-[acyl-carrier-protein] synthase (130 aa).

Mg(2+) is bound by residues Asp-9 and Glu-58.

It belongs to the P-Pant transferase superfamily. AcpS family. Mg(2+) is required as a cofactor.

Its subcellular location is the cytoplasm. The catalysed reaction is apo-[ACP] + CoA = holo-[ACP] + adenosine 3',5'-bisphosphate + H(+). In terms of biological role, transfers the 4'-phosphopantetheine moiety from coenzyme A to a Ser of acyl-carrier-protein. This Mycobacterium marinum (strain ATCC BAA-535 / M) protein is Holo-[acyl-carrier-protein] synthase.